A 459-amino-acid polypeptide reads, in one-letter code: Asperlicin C monooxygenase (459 aa).

Positions 49, 62, and 121 each coordinate FAD. Residue arginine 199 is part of the active site. Aspartate 323 and alanine 336 together coordinate FAD.

It belongs to the paxM FAD-dependent monooxygenase family. The cofactor is FAD.

It catalyses the reaction asperlicin C + NADPH + O2 + H(+) = asperlicin E + NADP(+) + H2O. It carries out the reaction asperlicin C + NADH + O2 + H(+) = asperlicin E + NAD(+) + H2O. In terms of biological role, catalyzes the conversion of asperlicin A to form asperlicin E, a potent cholecystokinin receptor CCK(A) antagonist. This chain is Asperlicin C monooxygenase, found in Petromyces alliaceus (Aspergillus alliaceus).